The chain runs to 155 residues: 6,7-dimethyl-8-ribityllumazine synthase (155 aa).

5-amino-6-(D-ribitylamino)uracil contacts are provided by residues Phe22, 56-58 (AFE), and 80-82 (AVI). 85 to 86 (ST) serves as a coordination point for (2S)-2-hydroxy-3-oxobutyl phosphate. His88 functions as the Proton donor in the catalytic mechanism. Phe113 contributes to the 5-amino-6-(D-ribitylamino)uracil binding site. Arg127 is a binding site for (2S)-2-hydroxy-3-oxobutyl phosphate.

It belongs to the DMRL synthase family.

The catalysed reaction is (2S)-2-hydroxy-3-oxobutyl phosphate + 5-amino-6-(D-ribitylamino)uracil = 6,7-dimethyl-8-(1-D-ribityl)lumazine + phosphate + 2 H2O + H(+). The protein operates within cofactor biosynthesis; riboflavin biosynthesis; riboflavin from 2-hydroxy-3-oxobutyl phosphate and 5-amino-6-(D-ribitylamino)uracil: step 1/2. Functionally, catalyzes the formation of 6,7-dimethyl-8-ribityllumazine by condensation of 5-amino-6-(D-ribitylamino)uracil with 3,4-dihydroxy-2-butanone 4-phosphate. This is the penultimate step in the biosynthesis of riboflavin. The sequence is that of 6,7-dimethyl-8-ribityllumazine synthase from Bifidobacterium longum subsp. infantis (strain ATCC 15697 / DSM 20088 / JCM 1222 / NCTC 11817 / S12).